A 416-amino-acid polypeptide reads, in one-letter code: Serine/threonine transporter SstT (416 aa).

The next 9 helical transmembrane spans lie at 15-35, 49-69, 82-102, 141-161, 192-212, 217-237, 288-308, 330-350, and 356-376; these read SLVS…MFMP, VGAL…AAII, ILLL…VASF, ALMD…GIAM, LGIL…ALFG, LVVL…IIVF, VSIP…ITVL, VVAT…LLLI, and LFGI…IIGV.

This sequence belongs to the dicarboxylate/amino acid:cation symporter (DAACS) (TC 2.A.23) family.

The protein localises to the cell inner membrane. The enzyme catalyses L-serine(in) + Na(+)(in) = L-serine(out) + Na(+)(out). The catalysed reaction is L-threonine(in) + Na(+)(in) = L-threonine(out) + Na(+)(out). Its function is as follows. Involved in the import of serine and threonine into the cell, with the concomitant import of sodium (symport system). This chain is Serine/threonine transporter SstT, found in Aeromonas salmonicida (strain A449).